A 635-amino-acid polypeptide reads, in one-letter code: Threonine--tRNA ligase (635 aa).

Residues 1-62 enclose the TGS domain; the sequence is MITITLPDGS…EHDAMLRIIT (62 aa). The interval 244-535 is catalytic; sequence DHRKIGKVQD…LIEHYAGIWP (292 aa). Positions 335, 386, and 512 each coordinate Zn(2+).

It belongs to the class-II aminoacyl-tRNA synthetase family. As to quaternary structure, homodimer. Zn(2+) serves as cofactor.

The protein resides in the cytoplasm. The catalysed reaction is tRNA(Thr) + L-threonine + ATP = L-threonyl-tRNA(Thr) + AMP + diphosphate + H(+). Its function is as follows. Catalyzes the attachment of threonine to tRNA(Thr) in a two-step reaction: L-threonine is first activated by ATP to form Thr-AMP and then transferred to the acceptor end of tRNA(Thr). Also edits incorrectly charged L-seryl-tRNA(Thr). This Xylella fastidiosa (strain 9a5c) protein is Threonine--tRNA ligase.